Consider the following 80-residue polypeptide: Gamma-conotoxin PnVIIA (80 aa).

An N-terminal signal peptide occupies residues 1 to 19 (MEKLTILLLVAAVLMSTQA). A propeptide spanning residues 20–43 (QNQEQRQQAKINFLSKRKPSAERW) is cleaved from the precursor. Disulfide bonds link Cys47–Cys61, Cys54–Cys65, and Cys60–Cys70. 4-carboxyglutamate is present on Glu59. Glu71 bears the 4-carboxyglutamate mark. The residue at position 76 (Pro76) is a 4-hydroxyproline. A propeptide spanning residues 78–80 (FGA) is cleaved from the precursor.

Expressed by the venom duct.

It is found in the secreted. In terms of biological role, gamma-conotoxins may act on voltage-gated non-specific cation pacemaker channels (HCN). Triggers depolarization and firing of action potential bursts in the caudodorsal neurons of lymnaea. This effect is due to activation or enhancement of a slow inward cation current that may underlie endogenous bursting activity of these neurons. The protein is Gamma-conotoxin PnVIIA of Conus pennaceus (Feathered cone).